A 656-amino-acid chain; its full sequence is Translation factor GUF1 homolog, mitochondrial (656 aa).

The N-terminal 29 residues, 1-29 (MLAVRRRGLRVLAVAPLRVRGLATTSTEF), are a transit peptide targeting the mitochondrion. Residues 54–238 (ERIRNFSIVA…AVVERLPPPV (185 aa)) enclose the tr-type G domain. GTP contacts are provided by residues 63–70 (AHIDHGKS), 131–135 (DTPGH), and 185–188 (TKID).

It belongs to the TRAFAC class translation factor GTPase superfamily. Classic translation factor GTPase family. LepA subfamily.

It is found in the mitochondrion inner membrane. The enzyme catalyses GTP + H2O = GDP + phosphate + H(+). In terms of biological role, promotes mitochondrial protein synthesis. May act as a fidelity factor of the translation reaction, by catalyzing a one-codon backward translocation of tRNAs on improperly translocated ribosomes. Binds to mitochondrial ribosomes in a GTP-dependent manner. This is Translation factor GUF1 homolog, mitochondrial from Phytophthora infestans (strain T30-4) (Potato late blight agent).